The sequence spans 335 residues: Holliday junction branch migration complex subunit RuvB (335 aa).

The interval 4–184 is large ATPase domain (RuvB-L); the sequence is VDRIVSANAK…FGIVQRLEFY (181 aa). ATP-binding positions include isoleucine 23, arginine 24, glycine 65, lysine 68, threonine 69, threonine 70, 131-133, arginine 174, tyrosine 184, and arginine 221; that span reads EDY. Threonine 69 contacts Mg(2+). The small ATPAse domain (RuvB-S) stretch occupies residues 185–255; sequence SVEDLASIVT…IAQEALKMLD (71 aa). The interval 258-335 is head domain (RuvB-H); that stretch reads LAGFDFMDRK…RHFGLEQIEK (78 aa). Residues arginine 294, arginine 313, and arginine 318 each coordinate DNA.

It belongs to the RuvB family. As to quaternary structure, homohexamer. Forms an RuvA(8)-RuvB(12)-Holliday junction (HJ) complex. HJ DNA is sandwiched between 2 RuvA tetramers; dsDNA enters through RuvA and exits via RuvB. An RuvB hexamer assembles on each DNA strand where it exits the tetramer. Each RuvB hexamer is contacted by two RuvA subunits (via domain III) on 2 adjacent RuvB subunits; this complex drives branch migration. In the full resolvosome a probable DNA-RuvA(4)-RuvB(12)-RuvC(2) complex forms which resolves the HJ.

It is found in the cytoplasm. The enzyme catalyses ATP + H2O = ADP + phosphate + H(+). The RuvA-RuvB-RuvC complex processes Holliday junction (HJ) DNA during genetic recombination and DNA repair, while the RuvA-RuvB complex plays an important role in the rescue of blocked DNA replication forks via replication fork reversal (RFR). RuvA specifically binds to HJ cruciform DNA, conferring on it an open structure. The RuvB hexamer acts as an ATP-dependent pump, pulling dsDNA into and through the RuvAB complex. RuvB forms 2 homohexamers on either side of HJ DNA bound by 1 or 2 RuvA tetramers; 4 subunits per hexamer contact DNA at a time. Coordinated motions by a converter formed by DNA-disengaged RuvB subunits stimulates ATP hydrolysis and nucleotide exchange. Immobilization of the converter enables RuvB to convert the ATP-contained energy into a lever motion, pulling 2 nucleotides of DNA out of the RuvA tetramer per ATP hydrolyzed, thus driving DNA branch migration. The RuvB motors rotate together with the DNA substrate, which together with the progressing nucleotide cycle form the mechanistic basis for DNA recombination by continuous HJ branch migration. Branch migration allows RuvC to scan DNA until it finds its consensus sequence, where it cleaves and resolves cruciform DNA. The sequence is that of Holliday junction branch migration complex subunit RuvB from Histophilus somni (strain 129Pt) (Haemophilus somnus).